A 326-amino-acid polypeptide reads, in one-letter code: 5,10-methylenetetrahydromethanopterin reductase (326 aa).

Belongs to the mer family.

It is found in the cytoplasm. It carries out the reaction 5-methyl-5,6,7,8-tetrahydromethanopterin + oxidized coenzyme F420-(gamma-L-Glu)(n) + H(+) = 5,10-methylenetetrahydromethanopterin + reduced coenzyme F420-(gamma-L-Glu)(n). Its pathway is one-carbon metabolism; methanogenesis from CO(2); methyl-coenzyme M from 5,10-methylene-5,6,7,8-tetrahydromethanopterin: step 1/2. Catalyzes the reversible reduction of methylene-H(4)MPT to methyl-H(4)MPT. This is 5,10-methylenetetrahydromethanopterin reductase from Methanolobus tindarius.